A 752-amino-acid polypeptide reads, in one-letter code: Putative xanthine dehydrogenase molybdenum-binding subunit XdhA (752 aa).

Residues glutamine 206, phenylalanine 237, arginine 350, and alanine 516 each contribute to the Mo-molybdopterin site.

This sequence belongs to the xanthine dehydrogenase family. In terms of assembly, heterotrimer of XdhA, XdhB and XdhC. Mo-molybdopterin is required as a cofactor.

It carries out the reaction xanthine + NAD(+) + H2O = urate + NADH + H(+). The catalysed reaction is hypoxanthine + NAD(+) + H2O = xanthine + NADH + H(+). The protein operates within purine metabolism; hypoxanthine degradation; urate from hypoxanthine: step 1/2. It participates in purine metabolism; hypoxanthine degradation; urate from hypoxanthine: step 2/2. In terms of biological role, presumed to be a dehydrogenase, but possibly an oxidase. Participates in limited purine salvage (requires aspartate) but does not support aerobic growth on purines as the sole carbon source (purine catabolism). Deletion results in increased adenine sensitivity, suggesting that this protein contributes to the conversion of adenine to guanine nucleotides during purine salvage. The polypeptide is Putative xanthine dehydrogenase molybdenum-binding subunit XdhA (xdhA) (Escherichia coli (strain K12)).